The following is a 110-amino-acid chain: Large ribosomal subunit protein uL22 (110 aa).

The protein belongs to the universal ribosomal protein uL22 family. Part of the 50S ribosomal subunit.

In terms of biological role, this protein binds specifically to 23S rRNA; its binding is stimulated by other ribosomal proteins, e.g. L4, L17, and L20. It is important during the early stages of 50S assembly. It makes multiple contacts with different domains of the 23S rRNA in the assembled 50S subunit and ribosome. The globular domain of the protein is located near the polypeptide exit tunnel on the outside of the subunit, while an extended beta-hairpin is found that lines the wall of the exit tunnel in the center of the 70S ribosome. This chain is Large ribosomal subunit protein uL22, found in Pasteurella multocida (strain Pm70).